The chain runs to 255 residues: 5-oxoprolinase subunit A 1 (255 aa).

The protein belongs to the LamB/PxpA family. As to quaternary structure, forms a complex composed of PxpA, PxpB and PxpC.

It carries out the reaction 5-oxo-L-proline + ATP + 2 H2O = L-glutamate + ADP + phosphate + H(+). Functionally, catalyzes the cleavage of 5-oxoproline to form L-glutamate coupled to the hydrolysis of ATP to ADP and inorganic phosphate. This Agrobacterium fabrum (strain C58 / ATCC 33970) (Agrobacterium tumefaciens (strain C58)) protein is 5-oxoprolinase subunit A 1.